The sequence spans 296 residues: DNA repair protein complementing XP-A cells homolog (296 aa).

A compositionally biased stretch (polar residues) spans 1 to 10 (MSAEVSTNES). Residues 1–39 (MSAEVSTNESAPPAEKKSKLTNAQKARIERNQAKAQKLR) are disordered. A compositionally biased stretch (basic and acidic residues) spans 26–39 (ARIERNQAKAQKLR). A Nuclear localization signal motif is present at residues 26–47 (ARIERNQAKAQKLREAKLVSHP). Residues Cys-126, Cys-129, Cys-147, and Cys-150 each coordinate Zn(2+). The segment at 126–150 (CLECGDMFADSYLFNNFGHSVCDKC) is a zinc-finger region.

It belongs to the XPA family. In terms of tissue distribution, strongly expressed in the central nervous system and muscles.

It is found in the nucleus. In terms of biological role, involved in DNA excision repair. Initiates repair by binding to damaged sites with various affinities, depending on the photoproduct and the transcriptional state of the region. This is DNA repair protein complementing XP-A cells homolog (Xpac) from Drosophila melanogaster (Fruit fly).